The primary structure comprises 878 residues: Outer membrane usher protein FimD (878 aa).

The first 45 residues, 1–45 (MSYLNLRLYQRNTQCLHIRKHRLAGFFVRLVVACAFAAQAPLSSA), serve as a signal peptide directing secretion. A disulfide bridge connects residues cysteine 855 and cysteine 877.

Belongs to the fimbrial export usher family.

It localises to the cell outer membrane. Its function is as follows. Involved in the export and assembly of FimA fimbrial subunits across the outer membrane. This is Outer membrane usher protein FimD (fimD) from Escherichia coli (strain K12).